The primary structure comprises 303 residues: MNIHRKPEWLRKKINPAAHGAMDELLGELRLHTVCREARCPNITECFRERQATFLILGAECTRLCSFCNVTKGEPLPPDPDEPARVAQAVVRLSLAHVVITSPTRDDLPDGGAGHYVATVATIGRVAPATVVELLIPDFLGSRAALADVVAAAPRIIGHNVETVPRLYAIRAGADYGRSLAVLRTLRELAPGCATKSGLMLGLGETEEEVLAVMADLRRVDCTYLSLGQYLAPSRFHHPVREFVLPETFDRLKELAEKMGFRHVESGPYVRSSYHAAGYGGGTRTDQPVASGCLSDQEGVSAQ.

7 residues coordinate [4Fe-4S] cluster: cysteine 35, cysteine 40, cysteine 46, cysteine 61, cysteine 65, cysteine 68, and serine 273. The region spanning 47–262 (FRERQATFLI…KELAEKMGFR (216 aa)) is the Radical SAM core domain.

It belongs to the radical SAM superfamily. Lipoyl synthase family. [4Fe-4S] cluster is required as a cofactor.

The protein resides in the cytoplasm. The enzyme catalyses [[Fe-S] cluster scaffold protein carrying a second [4Fe-4S](2+) cluster] + N(6)-octanoyl-L-lysyl-[protein] + 2 oxidized [2Fe-2S]-[ferredoxin] + 2 S-adenosyl-L-methionine + 4 H(+) = [[Fe-S] cluster scaffold protein] + N(6)-[(R)-dihydrolipoyl]-L-lysyl-[protein] + 4 Fe(3+) + 2 hydrogen sulfide + 2 5'-deoxyadenosine + 2 L-methionine + 2 reduced [2Fe-2S]-[ferredoxin]. The protein operates within protein modification; protein lipoylation via endogenous pathway; protein N(6)-(lipoyl)lysine from octanoyl-[acyl-carrier-protein]: step 2/2. Functionally, catalyzes the radical-mediated insertion of two sulfur atoms into the C-6 and C-8 positions of the octanoyl moiety bound to the lipoyl domains of lipoate-dependent enzymes, thereby converting the octanoylated domains into lipoylated derivatives. This Geobacter sulfurreducens (strain ATCC 51573 / DSM 12127 / PCA) protein is Lipoyl synthase.